The chain runs to 1408 residues: DNA-directed RNA polymerase subunit beta' (1408 aa).

Positions 70, 72, 85, and 88 each coordinate Zn(2+). Residues Asp458, Asp460, and Asp462 each coordinate Mg(2+). Residues Cys813, Cys887, Cys894, and Cys897 each coordinate Zn(2+). The tract at residues 1387-1408 (AELEAATATAPADAGGDSPATE) is disordered. A compositionally biased stretch (low complexity) spans 1389–1408 (LEAATATAPADAGGDSPATE).

The protein belongs to the RNA polymerase beta' chain family. The RNAP catalytic core consists of 2 alpha, 1 beta, 1 beta' and 1 omega subunit. When a sigma factor is associated with the core the holoenzyme is formed, which can initiate transcription. Requires Mg(2+) as cofactor. Zn(2+) serves as cofactor.

The catalysed reaction is RNA(n) + a ribonucleoside 5'-triphosphate = RNA(n+1) + diphosphate. DNA-dependent RNA polymerase catalyzes the transcription of DNA into RNA using the four ribonucleoside triphosphates as substrates. The protein is DNA-directed RNA polymerase subunit beta' of Polaromonas sp. (strain JS666 / ATCC BAA-500).